The chain runs to 422 residues: UDP-N-acetylglucosamine 1-carboxyvinyltransferase (422 aa).

22-23 provides a ligand contact to phosphoenolpyruvate; it reads KN. Arginine 93 serves as a coordination point for UDP-N-acetyl-alpha-D-glucosamine. Cysteine 117 (proton donor) is an active-site residue. Cysteine 117 carries the 2-(S-cysteinyl)pyruvic acid O-phosphothioketal modification. UDP-N-acetyl-alpha-D-glucosamine-binding positions include 122-126, aspartate 308, and leucine 330; that span reads RPVDL.

This sequence belongs to the EPSP synthase family. MurA subfamily.

The protein resides in the cytoplasm. The catalysed reaction is phosphoenolpyruvate + UDP-N-acetyl-alpha-D-glucosamine = UDP-N-acetyl-3-O-(1-carboxyvinyl)-alpha-D-glucosamine + phosphate. It participates in cell wall biogenesis; peptidoglycan biosynthesis. Cell wall formation. Adds enolpyruvyl to UDP-N-acetylglucosamine. The polypeptide is UDP-N-acetylglucosamine 1-carboxyvinyltransferase (Helicobacter pylori (strain P12)).